A 309-amino-acid chain; its full sequence is HPr kinase/phosphorylase (309 aa).

Residues His-138 and Lys-159 contribute to the active site. ATP is bound at residue 153–160 (GQSGVGKS). Ser-160 provides a ligand contact to Mg(2+). Asp-177 (proton acceptor; for phosphorylation activity. Proton donor; for dephosphorylation activity) is an active-site residue. Residues 201–210 (LEIRGLGIIN) are important for the catalytic mechanism of both phosphorylation and dephosphorylation. Glu-202 provides a ligand contact to Mg(2+). Arg-243 is a catalytic residue. Positions 264-269 (PVRPGR) are important for the catalytic mechanism of dephosphorylation.

This sequence belongs to the HPrK/P family. Homohexamer. Requires Mg(2+) as cofactor.

The enzyme catalyses [HPr protein]-L-serine + ATP = [HPr protein]-O-phospho-L-serine + ADP + H(+). It catalyses the reaction [HPr protein]-O-phospho-L-serine + phosphate + H(+) = [HPr protein]-L-serine + diphosphate. Its function is as follows. Catalyzes the ATP- as well as the pyrophosphate-dependent phosphorylation of a specific serine residue in HPr, a phosphocarrier protein of the phosphoenolpyruvate-dependent sugar phosphotransferase system (PTS). HprK/P also catalyzes the pyrophosphate-producing, inorganic phosphate-dependent dephosphorylation (phosphorolysis) of seryl-phosphorylated HPr (P-Ser-HPr). The two antagonistic activities of HprK/P are regulated by several intracellular metabolites, which change their concentration in response to the absence or presence of rapidly metabolisable carbon sources (glucose, fructose, etc.) in the growth medium. Also phosphorylates/dephosphorylates the HPr-like catabolite repression protein crh on a specific serine residue. Therefore, by controlling the phosphorylation state of HPr and crh, HPrK/P is a sensor enzyme that plays a major role in the regulation of carbon metabolism and sugar transport: it mediates carbon catabolite repression (CCR), and regulates PTS-catalyzed carbohydrate uptake and inducer exclusion. The polypeptide is HPr kinase/phosphorylase (Bacillus cereus (strain G9842)).